The sequence spans 206 residues: High frequency lysogenization protein HflD homolog (206 aa).

The protein belongs to the HflD family.

The protein localises to the cytoplasm. The protein resides in the cell inner membrane. The polypeptide is High frequency lysogenization protein HflD homolog (Pseudomonas syringae pv. syringae (strain B728a)).